Reading from the N-terminus, the 130-residue chain is Holo-[acyl-carrier-protein] synthase (130 aa).

Residues Asp-8 and Glu-62 each coordinate Mg(2+).

It belongs to the P-Pant transferase superfamily. AcpS family. Mg(2+) serves as cofactor.

The protein resides in the cytoplasm. It catalyses the reaction apo-[ACP] + CoA = holo-[ACP] + adenosine 3',5'-bisphosphate + H(+). Its function is as follows. Transfers the 4'-phosphopantetheine moiety from coenzyme A to a Ser of acyl-carrier-protein. The polypeptide is Holo-[acyl-carrier-protein] synthase (Variovorax paradoxus (strain S110)).